We begin with the raw amino-acid sequence, 371 residues long: Methionine import ATP-binding protein MetN (371 aa).

The segment at Met1–Pro22 is disordered. In terms of domain architecture, ABC transporter spans Ile27–Val268. Gly65–Ser72 is a binding site for ATP.

The protein belongs to the ABC transporter superfamily. Methionine importer (TC 3.A.1.24) family. In terms of assembly, the complex is composed of two ATP-binding proteins (MetN), two transmembrane proteins (MetI) and a solute-binding protein (MetQ).

It is found in the cell inner membrane. It catalyses the reaction L-methionine(out) + ATP + H2O = L-methionine(in) + ADP + phosphate + H(+). It carries out the reaction D-methionine(out) + ATP + H2O = D-methionine(in) + ADP + phosphate + H(+). In terms of biological role, part of the ABC transporter complex MetNIQ involved in methionine import. Responsible for energy coupling to the transport system. The sequence is that of Methionine import ATP-binding protein MetN from Rhodopseudomonas palustris (strain BisB5).